Here is a 710-residue protein sequence, read N- to C-terminus: Serine/threonine-protein phosphatase PP-Z2 (710 aa).

Residues 1 to 382 (MGNSGSKQHT…ADGDNGSRTN (382 aa)) form a disordered region. Residue glycine 2 is the site of N-myristoyl glycine attachment. Basic and acidic residues predominate over residues 15-27 (KKDDHDGDRKKTL). A compositionally biased stretch (low complexity) spans 40 to 49 (SLKSSRSLRS). Phosphoserine is present on residues serine 55 and serine 71. 2 stretches are compositionally biased toward polar residues: residues 62-77 (NVQAQTQPLSRRSSTL) and 95-104 (PNNHYLTSHP). 2 stretches are compositionally biased toward low complexity: residues 105 to 125 (SSSRRLSSSSRRSSMGNNNNS) and 143 to 155 (NSTSMHSTSSFNS). Residues 160 to 172 (LTDDDDDRGDDGG) are compositionally biased toward acidic residues. Threonine 161 is subject to Phosphothreonine. Phosphoserine occurs at positions 203 and 224. Positions 247–260 (SNRSNSHASSRKSS) are enriched in low complexity. Residues 261–273 (FGSTGNTAYSTPL) show a composition bias toward polar residues. The residue at position 271 (threonine 271) is a Phosphothreonine. Serine 275 carries the phosphoserine modification. A compositionally biased stretch (polar residues) spans 291–302 (DNVNGRGTSPIP). Serine 310 bears the Phosphoserine mark. Mn(2+) contacts are provided by aspartate 454, histidine 456, aspartate 482, and asparagine 514. Catalysis depends on histidine 515, which acts as the Proton donor. 2 residues coordinate Mn(2+): histidine 563 and histidine 638.

This sequence belongs to the PPP phosphatase family. PP-Z subfamily. The cofactor is Mn(2+).

It carries out the reaction O-phospho-L-seryl-[protein] + H2O = L-seryl-[protein] + phosphate. It catalyses the reaction O-phospho-L-threonyl-[protein] + H2O = L-threonyl-[protein] + phosphate. In terms of biological role, essential for the maintenance of cell size and integrity in response to osmotic stress. This Saccharomyces cerevisiae (strain ATCC 204508 / S288c) (Baker's yeast) protein is Serine/threonine-protein phosphatase PP-Z2 (PPZ2).